A 147-amino-acid polypeptide reads, in one-letter code: Large ribosomal subunit protein uL13 (147 aa).

Belongs to the universal ribosomal protein uL13 family. Part of the 50S ribosomal subunit.

Functionally, this protein is one of the early assembly proteins of the 50S ribosomal subunit, although it is not seen to bind rRNA by itself. It is important during the early stages of 50S assembly. This is Large ribosomal subunit protein uL13 from Salinispora arenicola (strain CNS-205).